Reading from the N-terminus, the 236-residue chain is 2-C-methyl-D-erythritol 4-phosphate cytidylyltransferase (236 aa).

The protein belongs to the IspD/TarI cytidylyltransferase family. IspD subfamily. Homodimer.

The enzyme catalyses 2-C-methyl-D-erythritol 4-phosphate + CTP + H(+) = 4-CDP-2-C-methyl-D-erythritol + diphosphate. Its pathway is isoprenoid biosynthesis; isopentenyl diphosphate biosynthesis via DXP pathway; isopentenyl diphosphate from 1-deoxy-D-xylulose 5-phosphate: step 2/6. In terms of biological role, catalyzes the formation of 4-diphosphocytidyl-2-C-methyl-D-erythritol from CTP and 2-C-methyl-D-erythritol 4-phosphate (MEP). The polypeptide is 2-C-methyl-D-erythritol 4-phosphate cytidylyltransferase (Escherichia coli O45:K1 (strain S88 / ExPEC)).